We begin with the raw amino-acid sequence, 84 residues long: Small ribosomal subunit protein eS27 (84 aa).

Residues 1–16 show a composition bias toward basic and acidic residues; that stretch reads MPLAKDLLHPSPEEEK. Residues 1-23 form a disordered region; the sequence is MPLAKDLLHPSPEEEKRKHKKKR. Ser11 bears the Phosphoserine mark. Residues 38–60 form a C4-type zinc finger; sequence PGCYKITTVFSHAQTVVLCVGCS.

The protein belongs to the eukaryotic ribosomal protein eS27 family. As to quaternary structure, component of the small ribosomal subunit. Part of the small subunit (SSU) processome, composed of more than 70 proteins and the RNA chaperone small nucleolar RNA (snoRNA) U3. The cofactor is Zn(2+).

It is found in the cytoplasm. The protein resides in the nucleus. It localises to the nucleolus. In terms of biological role, component of the small ribosomal subunit. The ribosome is a large ribonucleoprotein complex responsible for the synthesis of proteins in the cell. Required for proper rRNA processing and maturation of 18S rRNAs. Part of the small subunit (SSU) processome, first precursor of the small eukaryotic ribosomal subunit. During the assembly of the SSU processome in the nucleolus, many ribosome biogenesis factors, an RNA chaperone and ribosomal proteins associate with the nascent pre-rRNA and work in concert to generate RNA folding, modifications, rearrangements and cleavage as well as targeted degradation of pre-ribosomal RNA by the RNA exosome. In Mus musculus (Mouse), this protein is Small ribosomal subunit protein eS27.